An 859-amino-acid polypeptide reads, in one-letter code: Bifunctional uridylyltransferase/uridylyl-removing enzyme (859 aa).

Residues 1 to 325 (MSAHAAPSPE…PATSGITRVL (325 aa)) are uridylyltransferase. Positions 326–682 (SHDRFVEKQG…ARPSPIGDAL (357 aa)) are uridylyl-removing. An HD domain is found at 444–566 (VDQHILMVLR…VGNERYLTAL (123 aa)). ACT domains are found at residues 683 to 762 (QVLV…PEPS) and 791 to 859 (ILSV…AIAV).

Belongs to the GlnD family. Mg(2+) is required as a cofactor.

The catalysed reaction is [protein-PII]-L-tyrosine + UTP = [protein-PII]-uridylyl-L-tyrosine + diphosphate. It carries out the reaction [protein-PII]-uridylyl-L-tyrosine + H2O = [protein-PII]-L-tyrosine + UMP + H(+). Uridylyltransferase (UTase) activity is inhibited by glutamine, while glutamine activates uridylyl-removing (UR) activity. Functionally, modifies, by uridylylation and deuridylylation, the PII regulatory proteins (GlnB and homologs), in response to the nitrogen status of the cell that GlnD senses through the glutamine level. Under low glutamine levels, catalyzes the conversion of the PII proteins and UTP to PII-UMP and PPi, while under higher glutamine levels, GlnD hydrolyzes PII-UMP to PII and UMP (deuridylylation). Thus, controls uridylylation state and activity of the PII proteins, and plays an important role in the regulation of nitrogen fixation and metabolism. In Burkholderia vietnamiensis (strain G4 / LMG 22486) (Burkholderia cepacia (strain R1808)), this protein is Bifunctional uridylyltransferase/uridylyl-removing enzyme.